Reading from the N-terminus, the 424-residue chain is Protein TUNICAMYCIN INDUCED 1 (424 aa).

An N-terminal signal peptide occupies residues 1–25 (MGHRVLVYVGALFLILFTIFPSSSA). N-linked (GlcNAc...) asparagine glycans are attached at residues Asn197, Asn296, and Asn406.

In terms of tissue distribution, restricted to pollen grains at high levels.

The protein localises to the endoplasmic reticulum. Involved in the regulation of pollen surface morphology, probably by modulating the secretion of proteins and/or lipids during pollen development. The chain is Protein TUNICAMYCIN INDUCED 1 from Arabidopsis thaliana (Mouse-ear cress).